Reading from the N-terminus, the 446-residue chain is C4-dicarboxylate transport protein (446 aa).

A run of 9 helical transmembrane segments spans residues 20 to 40 (HLYV…HFYP), 56 to 76 (LVKM…IAGM), 91 to 111 (IYFL…ANVV), 160 to 180 (GDIL…AGVG), 200 to 220 (LVHI…AFTI), 233 to 253 (FLIL…LGLV), 319 to 339 (IYMT…LSLG), 344 to 364 (LLLV…AGFI), and 367 to 387 (AATL…ILGI).

The protein belongs to the dicarboxylate/amino acid:cation symporter (DAACS) (TC 2.A.23) family.

It is found in the cell inner membrane. Its function is as follows. Responsible for the transport of dicarboxylates such as succinate, fumarate, and malate from the periplasm across the membrane. This Azorhizobium caulinodans (strain ATCC 43989 / DSM 5975 / JCM 20966 / LMG 6465 / NBRC 14845 / NCIMB 13405 / ORS 571) protein is C4-dicarboxylate transport protein.